The chain runs to 95 residues: Small ribosomal subunit protein bS6 (95 aa).

Belongs to the bacterial ribosomal protein bS6 family.

Functionally, binds together with bS18 to 16S ribosomal RNA. This chain is Small ribosomal subunit protein bS6, found in Corynebacterium urealyticum (strain ATCC 43042 / DSM 7109).